The sequence spans 264 residues: Thymidylate synthase (264 aa).

DUMP is bound at residue Arg-21. Residue His-51 participates in (6R)-5,10-methylene-5,6,7,8-tetrahydrofolate binding. 126–127 (RR) serves as a coordination point for dUMP. The active-site Nucleophile is Cys-146. DUMP contacts are provided by residues 166–169 (RSCD), Asn-177, and 207–209 (HLY). Asp-169 lines the (6R)-5,10-methylene-5,6,7,8-tetrahydrofolate pocket. A (6R)-5,10-methylene-5,6,7,8-tetrahydrofolate-binding site is contributed by Ala-263.

It belongs to the thymidylate synthase family. Bacterial-type ThyA subfamily. As to quaternary structure, homodimer.

The protein resides in the cytoplasm. The catalysed reaction is dUMP + (6R)-5,10-methylene-5,6,7,8-tetrahydrofolate = 7,8-dihydrofolate + dTMP. It participates in pyrimidine metabolism; dTTP biosynthesis. Functionally, catalyzes the reductive methylation of 2'-deoxyuridine-5'-monophosphate (dUMP) to 2'-deoxythymidine-5'-monophosphate (dTMP) while utilizing 5,10-methylenetetrahydrofolate (mTHF) as the methyl donor and reductant in the reaction, yielding dihydrofolate (DHF) as a by-product. This enzymatic reaction provides an intracellular de novo source of dTMP, an essential precursor for DNA biosynthesis. The chain is Thymidylate synthase from Shigella dysenteriae serotype 1 (strain Sd197).